The chain runs to 359 residues: Insulin gene enhancer protein ISL-2 (359 aa).

LIM zinc-binding domains follow at residues 25–86 (AMCV…RLFG) and 87–149 (IKCA…LLER). Residues 151-191 (AAGSPRSPGPLPGARGLHLPDAGSGRQPALRPHVHKQTEKT) form a disordered region. 2 positions are modified to phosphoserine: Ser-154 and Ser-157. Residues 191-250 (TTRVRTVLNEKQLHTLRTCYAANPRPDALMKEQLVEMTGLSPRVIRVWFQNKRCKDKKKS) constitute a DNA-binding region (homeobox). The LIM-binding domain (LID) stretch occupies residues 272–301 (GTPLVAGSPIRHENAVQGSAVEVQTYQPPW). Position 279 is a phosphoserine (Ser-279). Over residues 326-336 (ESGSLGNSSGS) the composition is skewed to low complexity. The disordered stretch occupies residues 326–359 (ESGSLGNSSGSDVTSLSSQLPDTPNSMVPSPVET). Polar residues predominate over residues 337 to 359 (DVTSLSSQLPDTPNSMVPSPVET).

In terms of assembly, interacts with LHX4.

The protein localises to the nucleus. Its function is as follows. Transcriptional factor that defines subclasses of motoneurons that segregate into columns in the spinal cord and select distinct axon pathways. The protein is Insulin gene enhancer protein ISL-2 (ISL2) of Homo sapiens (Human).